Consider the following 236-residue polypeptide: UPF0257 lipoprotein YnfC (236 aa).

Positions 1-16 are cleaved as a signal peptide; that stretch reads MKYKLLPCLLAILLTG. The N-palmitoyl cysteine moiety is linked to residue Cys17. The S-diacylglycerol cysteine moiety is linked to residue Cys17.

This sequence belongs to the UPF0257 family.

It is found in the cell membrane. This Escherichia coli O157:H7 protein is UPF0257 lipoprotein YnfC.